Consider the following 483-residue polypeptide: Isocitrate dehydrogenase [NADP] (483 aa).

Position 74 (T74) interacts with NADP(+). The D-threo-isocitrate site is built by S83, N85, R89, R99, and R121. D232 contributes to the Mg(2+) binding site. NADP(+) contacts are provided by residues 264 to 270 and N277; that span reads HGSAPDI.

This sequence belongs to the isocitrate and isopropylmalate dehydrogenases family. In terms of assembly, homodimer. Requires Mg(2+) as cofactor. Mn(2+) is required as a cofactor.

The enzyme catalyses D-threo-isocitrate + NADP(+) = 2-oxoglutarate + CO2 + NADPH. Catalyzes the oxidative decarboxylation of isocitrate to 2-oxoglutarate and carbon dioxide with the concomitant reduction of NADP(+). The polypeptide is Isocitrate dehydrogenase [NADP] (icd) (Rickettsia bellii (strain RML369-C)).